The chain runs to 75 residues: Protein SlyX homolog (75 aa).

This sequence belongs to the SlyX family.

This chain is Protein SlyX homolog, found in Vibrio atlanticus (strain LGP32) (Vibrio splendidus (strain Mel32)).